The chain runs to 414 residues: 2,3-diketo-5-methylthiopentyl-1-phosphate enolase (414 aa).

Lysine 99 serves as the catalytic Proton acceptor. Substrate-binding positions include lysine 148, 174 to 177, histidine 265, glycine 338, and 360 to 361; these read KDDE and GG. 3 residues coordinate Mg(2+): lysine 174, aspartate 176, and glutamate 177. The residue at position 174 (lysine 174) is an N6-carboxylysine.

This sequence belongs to the RuBisCO large chain family. Type IV subfamily. In terms of assembly, homodimer. The cofactor is Mg(2+).

It carries out the reaction 5-methylsulfanyl-2,3-dioxopentyl phosphate = 2-hydroxy-5-methylsulfanyl-3-oxopent-1-enyl phosphate. It functions in the pathway amino-acid biosynthesis; L-methionine biosynthesis via salvage pathway; L-methionine from S-methyl-5-thio-alpha-D-ribose 1-phosphate: step 3/6. Functionally, catalyzes the enolization of 2,3-diketo-5-methylthiopentyl-1-phosphate (DK-MTP-1-P) into 2-hydroxy-3-keto-5-methylthiopentenyl-1-phosphate (HK-MTPenyl-1-P). This is 2,3-diketo-5-methylthiopentyl-1-phosphate enolase from Bacillus cereus (strain G9842).